The primary structure comprises 447 residues: Ribosomal protein uS12 methylthiotransferase RimO (447 aa).

The 111-residue stretch at 4-114 (PKVGFVSLGC…VMEAVHEYVP (111 aa)) folds into the MTTase N-terminal domain. Residues cysteine 13, cysteine 49, cysteine 78, cysteine 147, cysteine 151, and cysteine 154 each contribute to the [4Fe-4S] cluster site. The Radical SAM core domain occupies 133–370 (LTPKHYAYLK…MQVQQQISAA (238 aa)). One can recognise a TRAM domain in the interval 373-443 (QKRIGQTMTV…EYDLFAKLIK (71 aa)).

It belongs to the methylthiotransferase family. RimO subfamily. It depends on [4Fe-4S] cluster as a cofactor.

The protein localises to the cytoplasm. The enzyme catalyses L-aspartate(89)-[ribosomal protein uS12]-hydrogen + (sulfur carrier)-SH + AH2 + 2 S-adenosyl-L-methionine = 3-methylsulfanyl-L-aspartate(89)-[ribosomal protein uS12]-hydrogen + (sulfur carrier)-H + 5'-deoxyadenosine + L-methionine + A + S-adenosyl-L-homocysteine + 2 H(+). In terms of biological role, catalyzes the methylthiolation of an aspartic acid residue of ribosomal protein uS12. The protein is Ribosomal protein uS12 methylthiotransferase RimO of Acinetobacter baumannii (strain AB307-0294).